The sequence spans 453 residues: Wall-associated protein (453 aa).

The first 29 residues, Met-1–Ala-29, serve as a signal peptide directing secretion. Positions Gly-331–Thr-403 are disordered. Low complexity predominate over residues Glu-342–Thr-403. The short motif at Leu-422–Gly-426 is the LPXTG sorting signal element. Thr-425 carries the post-translational modification Pentaglycyl murein peptidoglycan amidated threonine. A propeptide spans Gly-426 to Arg-453 (removed by sortase).

The protein localises to the secreted. Its subcellular location is the cell wall. This is Wall-associated protein (wapA) from Streptococcus mutans serotype c (strain ATCC 700610 / UA159).